Reading from the N-terminus, the 505-residue chain is MSRSYNDELQYLDKIHKNCWRIRKGFVPNMQVEGVFYVNDPLEKLMFEELRNASRGGAAGGFLPAMKQIGNVAALPGIIHRSIGLPDVHSGYGFAIGNMAAFDMDNPEAVVSPGGVGFDINCGVRLLRTNLDESDVQPVKEQLAQAMFDHIPVGVGSKGVIPMGAKDLEEALEMGVDWSLREGYAWAEDKEHCEEYGRMLQADPSKVSSKAKKRGLPQLGTLGAGNHYAEVQVVDDIYDEYAAKKMGIDHKGQVCVMIHSGSRGLGHQVATDALVAMEKAMKRDKITVNDRQLACARISSAEGQDYLKGMAAAGNYAWVNRSSMTFLTRQAFSKVFNTTPDDLDLHVIYDVSHNIAKVEQHVVDGKEKTLLVHRKGSTRAFPPHHPLIPVDYQLTGQPVLIGGTMGTCSYVLTGTDQGMTETFGTTCHGAGRALSRAKSRRNLDFQDVLDKLADLGIAIRVASPKLVMEEAPESYKNVTDVVNTCHDAGISKKAIKLRPIAVIKG.

Mn(2+)-binding residues include aspartate 119, cysteine 122, histidine 227, histidine 259, and histidine 353. 226–230 lines the GMP pocket; that stretch reads NHYAE. GMP-binding positions include 353–354, 402–405, serine 409, 428–431, and lysine 504; these read HN, GGTM, and HGAG. Catalysis depends on histidine 428, which acts as the GMP-histidine intermediate.

It belongs to the RtcB family. As to quaternary structure, catalytic component of the tRNA-splicing ligase complex. The cofactor is Mn(2+).

It is found in the nucleus. The protein resides in the cytoplasm. It catalyses the reaction a 3'-end 3'-phospho-ribonucleotide-RNA + a 5'-end dephospho-ribonucleoside-RNA + GTP = a ribonucleotidyl-ribonucleotide-RNA + GMP + diphosphate. It carries out the reaction a 3'-end 2',3'-cyclophospho-ribonucleotide-RNA + a 5'-end dephospho-ribonucleoside-RNA + GTP + H2O = a ribonucleotidyl-ribonucleotide-RNA + GMP + diphosphate + H(+). In terms of biological role, catalytic subunit of the tRNA-splicing ligase complex that acts by directly joining spliced tRNA halves to mature-sized tRNAs by incorporating the precursor-derived splice junction phosphate into the mature tRNA as a canonical 3',5'-phosphodiester. May act as an RNA ligase with broad substrate specificity, and may function toward other RNAs. The sequence is that of RNA-splicing ligase RtcB homolog from Xenopus tropicalis (Western clawed frog).